We begin with the raw amino-acid sequence, 270 residues long: Transcriptional regulator BrlR (270 aa).

Position 1 (M1) interacts with 3',3'-c-di-GMP. The region spanning 1–71 (MLTIGQLARI…LEAIDRLKRD (71 aa)) is the HTH merR-type domain. The segment at residues 4-23 (IGQLARIFEISTKTLRHYDA) is a DNA-binding region (H-T-H motif). 3',3'-c-di-GMP contacts are provided by R31, S34, D35, Y40, R67, R70, R86, and Y270. The segment at 120 to 270 (MHARIVERPA…SQVDLYIPIY (151 aa)) is involved in effector-binding, probably including pyocyanine-binding.

Monomer. Homodimer; dimer formation enhanced in the presence of the second messenger, cyclic di-GMP (c-di-GMP). Homotetramer; dimer of dimers, arranged in a head-to-tail fashion, which may reduce DNA-binding ability. Conformational changes upon binding c-di-GMP or pyocyanine may facilitate DNA binding.

Transcriptional regulator. Responsive to the second messenger cyclic di-GMP (c-di-GMP) and to the virulence factor pyocyanine, which both enhance gene expression and promoter DNA binding of BrlR. Activates expression of operons encoding the multidrug efflux pumps MexAB-OprM and MexEF-OprN and several ABC transport systems, acting by direct binding to their respective promoters. Also acts as a repressor of the two component regulatory system, PhoPQ. Binds to promoter of its own gene. Contributes to the antimicrobial tolerance exhibited by biofilms, acting, at least in part, by activating expression of multidrug efflux pumps and ABC transporters. The sequence is that of Transcriptional regulator BrlR from Pseudomonas aeruginosa (strain ATCC 15692 / DSM 22644 / CIP 104116 / JCM 14847 / LMG 12228 / 1C / PRS 101 / PAO1).